We begin with the raw amino-acid sequence, 493 residues long: Ribosomal protein uS12 methylthiotransferase RimO (493 aa).

One can recognise an MTTase N-terminal domain in the interval 5–121 (RTVALVTLGC…ISDRLQTILN (117 aa)). [4Fe-4S] cluster-binding residues include Cys14, Cys50, Cys84, Cys198, Cys202, and Cys205. The region spanning 184 to 415 (LGTSPVASVK…QLAEELTSQR (232 aa)) is the Radical SAM core domain. The region spanning 417-487 (EERVGETLQV…GVDLVAEHHE (71 aa)) is the TRAM domain.

This sequence belongs to the methylthiotransferase family. RimO subfamily. It depends on [4Fe-4S] cluster as a cofactor.

It is found in the cytoplasm. The catalysed reaction is L-aspartate(89)-[ribosomal protein uS12]-hydrogen + (sulfur carrier)-SH + AH2 + 2 S-adenosyl-L-methionine = 3-methylsulfanyl-L-aspartate(89)-[ribosomal protein uS12]-hydrogen + (sulfur carrier)-H + 5'-deoxyadenosine + L-methionine + A + S-adenosyl-L-homocysteine + 2 H(+). Catalyzes the methylthiolation of an aspartic acid residue of ribosomal protein uS12. This chain is Ribosomal protein uS12 methylthiotransferase RimO, found in Streptomyces griseus subsp. griseus (strain JCM 4626 / CBS 651.72 / NBRC 13350 / KCC S-0626 / ISP 5235).